Here is a 650-residue protein sequence, read N- to C-terminus: Phosphomethylpyrimidine synthase (650 aa).

Substrate-binding positions include N241, M270, Y299, H335, 355 to 357 (SRG), 396 to 399 (DGLR), and E435. H439 lines the Zn(2+) pocket. Y462 serves as a coordination point for substrate. Residue H503 participates in Zn(2+) binding. 3 residues coordinate [4Fe-4S] cluster: C583, C586, and C591.

This sequence belongs to the ThiC family. Homodimer. [4Fe-4S] cluster serves as cofactor.

It carries out the reaction 5-amino-1-(5-phospho-beta-D-ribosyl)imidazole + S-adenosyl-L-methionine = 4-amino-2-methyl-5-(phosphooxymethyl)pyrimidine + CO + 5'-deoxyadenosine + formate + L-methionine + 3 H(+). It participates in cofactor biosynthesis; thiamine diphosphate biosynthesis. Functionally, catalyzes the synthesis of the hydroxymethylpyrimidine phosphate (HMP-P) moiety of thiamine from aminoimidazole ribotide (AIR) in a radical S-adenosyl-L-methionine (SAM)-dependent reaction. The sequence is that of Phosphomethylpyrimidine synthase from Pseudoalteromonas translucida (strain TAC 125).